Here is a 482-residue protein sequence, read N- to C-terminus: Transcription termination/antitermination protein NusA (482 aa).

Positions 133–197 (NKVVIGYVQQ…NGIEVILSRT (65 aa)) constitute an S1 motif domain. The region spanning 300–446 (LHKALVVVSD…NDNDESMEKV (147 aa)) is the KH domain.

This sequence belongs to the NusA family. Monomer. Binds directly to the core enzyme of the DNA-dependent RNA polymerase and to nascent RNA.

The protein resides in the cytoplasm. Participates in both transcription termination and antitermination. The polypeptide is Transcription termination/antitermination protein NusA (Borreliella burgdorferi (strain ATCC 35210 / DSM 4680 / CIP 102532 / B31) (Borrelia burgdorferi)).